The chain runs to 256 residues: Triosephosphate isomerase (256 aa).

9 to 11 (NWK) contacts substrate. His-97 acts as the Electrophile in catalysis. The active-site Proton acceptor is Glu-169. Residues Gly-175, Ser-214, and 235–236 (GG) each bind substrate.

Belongs to the triosephosphate isomerase family. Homodimer.

It localises to the cytoplasm. The enzyme catalyses D-glyceraldehyde 3-phosphate = dihydroxyacetone phosphate. It functions in the pathway carbohydrate biosynthesis; gluconeogenesis. It participates in carbohydrate degradation; glycolysis; D-glyceraldehyde 3-phosphate from glycerone phosphate: step 1/1. Its function is as follows. Involved in the gluconeogenesis. Catalyzes stereospecifically the conversion of dihydroxyacetone phosphate (DHAP) to D-glyceraldehyde-3-phosphate (G3P). In Aliivibrio salmonicida (strain LFI1238) (Vibrio salmonicida (strain LFI1238)), this protein is Triosephosphate isomerase.